A 197-amino-acid chain; its full sequence is dITP/XTP pyrophosphatase (197 aa).

Substrate is bound at residue 8–13; sequence TGNAGK. Mg(2+) contacts are provided by E40 and D69. The active-site Proton acceptor is D69. Residues S70, 154 to 157, K177, and 182 to 183 each bind substrate; these read FGYD and HR.

The protein belongs to the HAM1 NTPase family. In terms of assembly, homodimer. Mg(2+) serves as cofactor.

The enzyme catalyses XTP + H2O = XMP + diphosphate + H(+). It catalyses the reaction dITP + H2O = dIMP + diphosphate + H(+). It carries out the reaction ITP + H2O = IMP + diphosphate + H(+). Functionally, pyrophosphatase that catalyzes the hydrolysis of nucleoside triphosphates to their monophosphate derivatives, with a high preference for the non-canonical purine nucleotides XTP (xanthosine triphosphate), dITP (deoxyinosine triphosphate) and ITP. Seems to function as a house-cleaning enzyme that removes non-canonical purine nucleotides from the nucleotide pool, thus preventing their incorporation into DNA/RNA and avoiding chromosomal lesions. In Shigella flexneri, this protein is dITP/XTP pyrophosphatase (rdgB).